Consider the following 724-residue polypeptide: Protein Aster-A (724 aa).

Residues 1–18 (MFDTTPHSGRSTPSSSPS) are compositionally biased toward low complexity. The segment at 1–66 (MFDTTPHSGR…TPSTQSLGSR (66 aa)) is disordered. Over residues 57–66 (TPSTQSLGSR) the composition is skewed to polar residues. The 68-residue stretch at 91-158 (EDFRKLFSKL…KEVTCLKKEK (68 aa)) folds into the GRAM domain. A disordered region spans residues 256–336 (SSGAADRSQE…GPTTLGPLDL (81 aa)). Phosphoserine is present on residues serine 263, serine 267, and serine 271. Residues 300–312 (DSQPDASSSQTVT) are compositionally biased toward polar residues. A compositionally biased stretch (low complexity) spans 326–336 (DGPTTLGPLDL). The 172-residue stretch at 367–538 (SGRLLINSVF…ELAKAEKLSL (172 aa)) folds into the VASt domain. Serine 415 bears the Phosphoserine mark. Residues 560 to 579 (SWRAHGDGPQHPDPDPCARA) form a disordered region. Basic and acidic residues predominate over residues 563-575 (AHGDGPQHPDPDP). A helical membrane pass occupies residues 610-630 (LISIVICVSLIILIALNVLLF).

Expressed in liver.

It is found in the endoplasmic reticulum membrane. The protein resides in the cell membrane. The protein localises to the cytoplasmic vesicle. It localises to the autophagosome. Cholesterol transporter that mediates non-vesicular transport of cholesterol from the plasma membrane (PM) to the endoplasmic reticulum (ER). Contains unique domains for binding cholesterol and the PM, thereby serving as a molecular bridge for the transfer of cholesterol from the PM to the ER. Plays a crucial role in cholesterol homeostasis and has the unique ability to localize to the PM based on the level of membrane cholesterol. In lipid-poor conditions localizes to the ER membrane and in response to excess cholesterol in the PM is recruited to the endoplasmic reticulum-plasma membrane contact sites (EPCS) which is mediated by the GRAM domain. At the EPCS, the sterol-binding VASt/ASTER domain binds to the cholesterol in the PM and facilitates its transfer from the PM to ER. May play a role in tumor progression. Plays a role in autophagy regulation and is required for biogenesis of the autophagosome. This function in autophagy requires its cholesterol-transfer activity. The protein is Protein Aster-A of Homo sapiens (Human).